Here is a 257-residue protein sequence, read N- to C-terminus: 3-dehydroquinate dehydratase (257 aa).

3-dehydroquinate-binding positions include 50-52 and arginine 86; that span reads EWR. Histidine 147 acts as the Proton donor/acceptor in catalysis. Catalysis depends on lysine 174, which acts as the Schiff-base intermediate with substrate. Residues arginine 216, serine 235, and glutamine 239 each contribute to the 3-dehydroquinate site.

It belongs to the type-I 3-dehydroquinase family. As to quaternary structure, homodimer.

The catalysed reaction is 3-dehydroquinate = 3-dehydroshikimate + H2O. The protein operates within metabolic intermediate biosynthesis; chorismate biosynthesis; chorismate from D-erythrose 4-phosphate and phosphoenolpyruvate: step 3/7. In terms of biological role, involved in the third step of the chorismate pathway, which leads to the biosynthesis of aromatic amino acids. Catalyzes the cis-dehydration of 3-dehydroquinate (DHQ) and introduces the first double bond of the aromatic ring to yield 3-dehydroshikimate. The chain is 3-dehydroquinate dehydratase from Geobacillus kaustophilus (strain HTA426).